The sequence spans 120 residues: NAD(P)H-quinone oxidoreductase subunit 3, chloroplastic (120 aa).

3 consecutive transmembrane segments (helical) span residues tyrosine 7–isoleucine 27, methionine 64–methionine 84, and leucine 89–isoleucine 109.

The protein belongs to the complex I subunit 3 family. In terms of assembly, NDH is composed of at least 16 different subunits, 5 of which are encoded in the nucleus.

The protein localises to the plastid. It localises to the chloroplast thylakoid membrane. It carries out the reaction a plastoquinone + NADH + (n+1) H(+)(in) = a plastoquinol + NAD(+) + n H(+)(out). It catalyses the reaction a plastoquinone + NADPH + (n+1) H(+)(in) = a plastoquinol + NADP(+) + n H(+)(out). NDH shuttles electrons from NAD(P)H:plastoquinone, via FMN and iron-sulfur (Fe-S) centers, to quinones in the photosynthetic chain and possibly in a chloroplast respiratory chain. The immediate electron acceptor for the enzyme in this species is believed to be plastoquinone. Couples the redox reaction to proton translocation, and thus conserves the redox energy in a proton gradient. This is NAD(P)H-quinone oxidoreductase subunit 3, chloroplastic from Anthoceros angustus (Hornwort).